The following is a 1085-amino-acid chain: Ankyrin repeat and IBR domain-containing protein 1 (1085 aa).

Gly2 carries the N-myristoyl glycine lipid modification. 2 ANK repeats span residues 45 to 75 and 145 to 174; these read QHNT…NPNK and KKNT…DLFA. Positions 282-322 are disordered; it reads CQRSGVQMPTPPPSGYNAWDTLPSPRTPRTTRSSVTSPDEI. Positions 304-319 are enriched in low complexity; sequence PSPRTPRTTRSSVTSP. The interval 330-570 is TRIAD supradomain; it reads DTSLCDICMC…GGYYRCTRYE (241 aa). Cys334, Cys337, Cys352, His354, Cys357, Cys360, Cys379, Cys384, Cys466, Cys469, His474, Cys479, Cys520, and Cys523 together coordinate Zn(2+). The segment at 334–384 adopts an RING-type 1 zinc-finger fold; that stretch reads CDICMCSISVFEDPVDMPCGHDFCRGCWEAFLNLKIQEGEAHNIFCPAYEC. An IBR-type zinc finger spans residues 402–479; that stretch reads DKRYLQFDIK…LGEAHEPCDC (78 aa). The RING-type 2; atypical zinc-finger motif lies at 520-549; sequence CANCKSPIQKNEGCNHMQCAKCKYDFCWIC. Cys533 is a catalytic residue. Positions 538, 541, 546, 549, 556, and 566 each coordinate Zn(2+). A coiled-coil region spans residues 576–641; that stretch reads EEQSKEMTVE…RALKETEGGC (66 aa). The residue at position 738 (Ser738) is a Phosphoserine. The tract at residues 764 to 808 is disordered; the sequence is RRRHRQQRRRGDVHSLLSNPTDLDEPSESTFDLPEGSSGRRPGAS. Residues 846-865 form the UIM domain; sequence EDDPNILLAIQLSLQESGLD. Residues Ser879 and Ser906 each carry the phosphoserine modification. Disordered regions lie at residues 884-907, 921-959, and 1014-1085; these read GSSL…ALSS, GADS…QDPS, and PPED…VHSV. Polar residues predominate over residues 926–959; it reads PFSTDTLSSRPLSETRSDFCPSSSDLDSAGQDPS. Residues 1018–1033 are compositionally biased toward basic and acidic residues; it reads SVSKDTGVHEGERAQM. Polar residues predominate over residues 1068 to 1085; sequence ASQTPQTSSDWLEQVHSV.

Belongs to the RBR family.

It carries out the reaction [E2 ubiquitin-conjugating enzyme]-S-ubiquitinyl-L-cysteine + [acceptor protein]-L-lysine = [E2 ubiquitin-conjugating enzyme]-L-cysteine + [acceptor protein]-N(6)-ubiquitinyl-L-lysine.. In terms of biological role, might act as an E3 ubiquitin-protein ligase, or as part of E3 complex, which accepts ubiquitin from specific E2 ubiquitin-conjugating enzymes and then transfers it to substrates. The polypeptide is Ankyrin repeat and IBR domain-containing protein 1 (Ankib1) (Mus musculus (Mouse)).